Here is a 395-residue protein sequence, read N- to C-terminus: Acetate kinase (395 aa).

Mg(2+) is bound at residue Asn10. Position 17 (Lys17) interacts with ATP. Arg87 is a substrate binding site. Asp144 serves as the catalytic Proton donor/acceptor. Residues 204–208 (HLGNG), 279–281 (DMR), and 327–331 (GIGEN) each bind ATP. Mg(2+) is bound at residue Glu381.

Belongs to the acetokinase family. Homodimer. Mg(2+) serves as cofactor. Requires Mn(2+) as cofactor.

The protein resides in the cytoplasm. It carries out the reaction acetate + ATP = acetyl phosphate + ADP. It functions in the pathway metabolic intermediate biosynthesis; acetyl-CoA biosynthesis; acetyl-CoA from acetate: step 1/2. Its function is as follows. Catalyzes the formation of acetyl phosphate from acetate and ATP. Can also catalyze the reverse reaction. The chain is Acetate kinase from Stutzerimonas stutzeri (strain A1501) (Pseudomonas stutzeri).